The primary structure comprises 317 residues: Ricin B-like lectin EULS3 (317 aa).

Positions 1-11 (MEHHHQHHRHH) are enriched in basic residues. The disordered stretch occupies residues 1–157 (MEHHHQHHRH…YHKPDENRLP (157 aa)). Over residues 25 to 36 (VPPPHVDAPPQP) the composition is skewed to pro residues. Polar residues predominate over residues 136–146 (HSSNQPQSSSG). The Ricin B-type lectin domain maps to 168–315 (TVKVYSKAEP…KGDNQLWKIF (148 aa)).

In terms of assembly, interacts (via N-terminus) with ATS3A and ATS3B. In terms of tissue distribution, expressed in roots, rosette leaves, stems, cauline leaves and flowers.

The protein localises to the nucleus. It is found in the cytoplasm. Its function is as follows. Lectin which binds carbohydrates in vitro. Interacts through its lectin domain with glycan structures containing one or more Lewis X, Lewis Y or lactosamine motifs. May play a role in abiotic stress responses. May play a role in abscisic acid-induced stomatal closure. May play a role in disease resistance against Pseudomonas syringae through its involvement in stomatal movement. The protein is Ricin B-like lectin EULS3 of Arabidopsis thaliana (Mouse-ear cress).